Reading from the N-terminus, the 556-residue chain is Guard cell S-type anion channel SLAC1 (556 aa).

The tract at residues 1 to 103 (MERKQSNAHS…GIINGGDGRK (103 aa)) is disordered. Residues 1–189 (MERKQSNAHS…EQWPFLLRFP (189 aa)) lie on the Cytoplasmic side of the membrane. Residues 10–36 (STFADINEVEDEAEQELQQQENNNNKR) are a coiled coil. Residues 25-34 (ELQQQENNNN) show a composition bias toward low complexity. The residue at position 59 (serine 59) is a Phosphoserine; by SRK2E. A compositionally biased stretch (basic and acidic residues) spans 69–79 (RESRERDDKKS). Serine 86, serine 113, and serine 120 each carry phosphoserine; by SRK2E. The segment covering 86–99 (SFGGFESGGIINGG) has biased composition (gly residues). The residue at position 146 (serine 146) is a Phosphoserine. The chain crosses the membrane as a helical span at residues 190–210 (IGCFGICLGLSSQAVLWLALA). Topologically, residues 211–216 (KSPATN) are extracellular. A helical transmembrane segment spans residues 217-237 (FLHITPLINLVVWLFSLVVLV). The Cytoplasmic segment spans residues 238–265 (SVSFTYILKCIFYFEAVKREYFHPVRVN). A helical transmembrane segment spans residues 266-286 (FFFAPWVVCMFLAISVPPMFS). At 287 to 295 (PNRKYLHPA) the chain is on the extracellular side. The helical transmembrane segment at 296 to 316 (IWCVFMGPYFFLELKIYGQWL) threads the bilayer. Over 317 to 325 (SGGKRRLCK) the chain is Cytoplasmic. A helical membrane pass occupies residues 326-346 (VANPSSHLSVVGNFVGAILAS). Residues 347-352 (KVGWDE) are Extracellular-facing. Residues 353–373 (VAKFLWAVGFAHYLVVFVTLY) form a helical membrane-spanning segment. Residues 374–388 (QRLPTSEALPKELHP) are Cytoplasmic-facing. The chain crosses the membrane as a helical span at residues 389–409 (VYSMFIAAPSAASIAWNTIYG). The Extracellular segment spans residues 410 to 418 (QFDGCSRTC). A helical membrane pass occupies residues 419-439 (FFIALFLYISLVARINFFTGF). Residue lysine 440 is a topological domain, cytoplasmic. Residues 441-463 (FSVAWWSYTFPMTTASVATIKYA) traverse the membrane as a helical segment. Topologically, residues 464–479 (EAVPGYPSRALALTLS) are extracellular. The helical transmembrane segment at 480 to 500 (FISTAMVCVLFVSTLLHAFVW) threads the bilayer. Residues 501–556 (QTLFPNDLAIAITKRKLTREKKPFKRAYDLKRWTKQALAKKISAEKDFEAEEESHH) lie on the Cytoplasmic side of the membrane.

Belongs to the SLAC1 S-type anion channel family. As to quaternary structure, homotrimer. Interacts with SRK2E, CPK6, CPK21, CPK23 and PP2CA. The channel is inactivated upon PP2CA and ABI1 binding. Interacts with KAT1, KAT2, KAT3/KC1 and AKT2. Interacts with GHR1. Post-translationally, phosphorylation by SRK2E, especially on Ser-120, activates the channel. Also phosphorylated and activated by CPK21 and CPK23. Abscisic acid (ABA) promotes phosphorylation. This phosphorylation is inhibited by ABI1. Phosphorylated and activated by GHR1; this phosphorylation is repressed by ABI2 but not ABI1. Phosphorylated by HT1 on N-terminus but not C-terminus. As to expression, preferentially expressed in guard cells. Also detected in the vascular strands close to the leaf margins.

It is found in the cell membrane. With respect to regulation, activated by GHR1-mediated phosphorylation which is negatively regulated by ABI2 but not ABI1. Activation by SRK2E/OST1 and GHR1 is repressed by HT1. Its function is as follows. Slow, weak voltage-dependent S-type anion efflux channel involved in maintenance of anion homeostasis. Cl(-) efflux through SLAC1 causes membrane depolarization, which activates outward-rectifying K1 channels, leading to KCl and water efflux to reduce turgor further and cause stomatal closure, that reduces water loss and promotes leaf turgor. Essential for stomatal closure in response to CO(2), abscisic acid (ABA), ozone O(3), light/dark transitions, humidity change, calcium ions, hydrogen peroxide H(2)O(2), reactive oxygen species (ROS), and nitric oxide. Binds to the highly selective inward-rectifying potassium channels KAT1 and AKT2, and inhibits their activities. Functions as an essential negative regulator of inward potassium channels in guard cells. Essential for the efficient stomatal closure and opening in guard cells. Involved in the local and/or systemic stomatal responses (e.g. stomatal closure) to light stress. The chain is Guard cell S-type anion channel SLAC1 from Arabidopsis thaliana (Mouse-ear cress).